Consider the following 496-residue polypeptide: Glycerol kinase (496 aa).

Threonine 12 contributes to the ADP binding site. ATP-binding residues include threonine 12, threonine 13, and serine 14. Position 12 (threonine 12) interacts with sn-glycerol 3-phosphate. Residue arginine 16 coordinates ADP. Positions 82, 83, and 134 each coordinate sn-glycerol 3-phosphate. Glycerol-binding residues include arginine 82, glutamate 83, and tyrosine 134. Histidine 230 carries the phosphohistidine; by HPr modification. Aspartate 244 provides a ligand contact to sn-glycerol 3-phosphate. Glycerol-binding residues include aspartate 244 and glutamine 245. Residues threonine 266 and glycine 309 each coordinate ADP. ATP is bound by residues threonine 266, glycine 309, glutamine 313, and glycine 410. 2 residues coordinate ADP: glycine 410 and asparagine 414.

Belongs to the FGGY kinase family. As to quaternary structure, homotetramer and homodimer (in equilibrium). Post-translationally, the phosphoenolpyruvate-dependent sugar phosphotransferase system (PTS), including enzyme I, and histidine-containing protein (HPr) are required for the phosphorylation, which leads to the activation of the enzyme.

The enzyme catalyses glycerol + ATP = sn-glycerol 3-phosphate + ADP + H(+). Its pathway is polyol metabolism; glycerol degradation via glycerol kinase pathway; sn-glycerol 3-phosphate from glycerol: step 1/1. With respect to regulation, activated by phosphorylation and inhibited by fructose 1,6-bisphosphate (FBP). Functionally, key enzyme in the regulation of glycerol uptake and metabolism. Catalyzes the phosphorylation of glycerol to yield sn-glycerol 3-phosphate. In Bacillus mycoides (strain KBAB4) (Bacillus weihenstephanensis), this protein is Glycerol kinase.